A 792-amino-acid chain; its full sequence is Cullin-4 (792 aa).

Positions 1-10 (MSLPTKRSTF) are enriched in polar residues. A disordered region spans residues 1-43 (MSLPTKRSTFSAASASDDSSYSSPPMKKAKNDLHHSPQHPNTA). Over residues 11-23 (SAASASDDSSYSS) the composition is skewed to low complexity. The region spanning 724–784 (DRQYQIDAAI…REYLEREKSN (61 aa)) is the Cullin neddylation domain. A Glycyl lysine isopeptide (Lys-Gly) (interchain with G-Cter in NEDD8) cross-link involves residue lysine 738.

Belongs to the cullin family. As to quaternary structure, interacts with COP10, CSN3, CSN4, CSN5, CSN8, DDB1A, DDB1B, DDB2, DET1 and RBX1. Neddylated (rubylated). Deneddylated via its interaction with the COP9 signalosome (CSN) complex. In terms of tissue distribution, ubiquitous.

The protein localises to the nucleus. Its pathway is protein modification; protein ubiquitination. Component of the CUL4-RBX1-CDD (COP10-DDB1a-DET1) E3 ubiquitin-protein ligase complex which mediates the ubiquitination and subsequent proteasomal degradation of target proteins. Participates in the CDD complex to light-mediated control of development. May repress photomorphogenesis through enhancing COP1 E3 ubiquitin-protein ligase activity. Acts together with the CUL4-DDB1-COP1-SPA E3 ubiquitin-protein ligase complexes in the repression of photomorphogenesis and flowering time. Component ot the CUL4-RBX1-DDB1-PRL1 E3 ubiquitin-protein ligase complex which mediates ubiquitination and subsequent degradation of AKIN10. Component of the CUL4-RBX1-DDB1-DWA1/DWA2 E3 ubiquitin-protein ligase complex that acts as a negative regulator in abscisic acid (ABA) signaling and may target ABI5 for degradation. This Arabidopsis thaliana (Mouse-ear cress) protein is Cullin-4 (CUL4).